Reading from the N-terminus, the 304-residue chain is UDP-N-acetylenolpyruvoylglucosamine reductase (304 aa).

Residues 33–198 enclose the FAD-binding PCMH-type domain; it reads RVGGPVDILL…ITATFCFESG (166 aa). Arg-177 is an active-site residue. Catalysis depends on Ser-227, which acts as the Proton donor. The active site involves Glu-297.

Belongs to the MurB family. The cofactor is FAD.

It localises to the cytoplasm. The catalysed reaction is UDP-N-acetyl-alpha-D-muramate + NADP(+) = UDP-N-acetyl-3-O-(1-carboxyvinyl)-alpha-D-glucosamine + NADPH + H(+). It functions in the pathway cell wall biogenesis; peptidoglycan biosynthesis. In terms of biological role, cell wall formation. The sequence is that of UDP-N-acetylenolpyruvoylglucosamine reductase from Clostridium botulinum (strain Eklund 17B / Type B).